Consider the following 666-residue polypeptide: MIKLLKPMSLSILLVFILSFSFPFPTAKAAANDNNVEWNGLFHDQGPLFDNAPEPTSTQSVTLKLRTFKGDITSANIKYWDTADNAFHWVPMVWDSNDPTGTFDYWKGTIPASPSIKYYRFQINDGTSTAWYNGNGPSSTEPNADDFYIIPNFKTPDWLKNGVMYQIFPDRFYNGDSSNDVQTGSYTYNGTPTEKKAWGSSVYADPGYDNSLVFFGGDLAGIDQKLGYIKKTLGANILYLNPIFKAPTNHKYDTQDYMAVDPAFGDNSTLQTLINDIHSTANGPKGYLILDGVFNHTGDSHPWFDKYNNFSSQGAYESQSSPWYNYYTFYTWPDSYASFLGFNSLPKLNYGNSGSAVRGVIYNNSNSVAKTYLNPPYSVDGWRLDAAQYVDANGNNGSDVTNHQIWSEFRNAVKGVNSNAAIIGEYWGNANPWTAQGNQWDAATNFDGFTQPVSEWITGKDYQNNSASISTTQFDSWLRGTRANYPTNVQQSMMNFLSNHDITRFATRSGGDLWKTYLALIFQMTYVGTPTIYYGDEYGMQGGADPDNRRSFDWSQATPSNSAVALTQKLITIRNQYPALRTGSFMTLITDDTNKIYSYGRFDNVNRIAVVLNNDSVSHTVNVPVWQLSMPNGSTVTDKITGHSYTVQNGMVTVAVDGHYGAVLAQ.

An N-terminal signal peptide occupies residues 1–29 (MIKLLKPMSLSILLVFILSFSFPFPTAKA). Ca(2+) is bound by residues alanine 31, aspartate 33, asparagine 35, aspartate 71, aspartate 125, asparagine 174, aspartate 176, asparagine 179, aspartate 180, glycine 216, and aspartate 218. Position 296 (histidine 296) interacts with substrate. Ca(2+) is bound by residues aspartate 305, asparagine 309, phenylalanine 310, serine 312, and glutamate 317. Arginine 383 serves as a coordination point for substrate. Catalysis depends on aspartate 385, which acts as the Nucleophile. Glutamate 425 functions as the Proton donor in the catalytic mechanism. Substrate contacts are provided by residues 500–501 (HD), aspartate 545, and arginine 549.

It belongs to the glycosyl hydrolase 13 family. Ca(2+) is required as a cofactor.

Its subcellular location is the secreted. It catalyses the reaction Hydrolysis of pullulan to panose (6-alpha-D-glucosylmaltose).. Endohydrolysis of 1,4-alpha-glucosidic linkages in pullulan to form panose. Also hydrolyzes cyclodextrins. The protein is Neopullulanase 1 (tvaI) of Thermoactinomyces vulgaris.